Here is a 382-residue protein sequence, read N- to C-terminus: Lipoyl synthase, mitochondrial (382 aa).

The N-terminal 30 residues, 1–30 (MHGRRHLAASLARALTYAPSRSISSTPSLL), are a transit peptide targeting the mitochondrion. The span at 25–34 (STPSLLQTLD) shows a compositional bias: polar residues. Residues 25 to 46 (STPSLLQTLDPSTPSPAAAPPT) are disordered. 7 residues coordinate [4Fe-4S] cluster: C112, C117, C123, C143, C147, C150, and S359. A Radical SAM core domain is found at 128–348 (ETGTATATIM…RSLGVDMGFR (221 aa)).

The protein belongs to the radical SAM superfamily. Lipoyl synthase family. It depends on [4Fe-4S] cluster as a cofactor.

Its subcellular location is the mitochondrion. It catalyses the reaction [[Fe-S] cluster scaffold protein carrying a second [4Fe-4S](2+) cluster] + N(6)-octanoyl-L-lysyl-[protein] + 2 oxidized [2Fe-2S]-[ferredoxin] + 2 S-adenosyl-L-methionine + 4 H(+) = [[Fe-S] cluster scaffold protein] + N(6)-[(R)-dihydrolipoyl]-L-lysyl-[protein] + 4 Fe(3+) + 2 hydrogen sulfide + 2 5'-deoxyadenosine + 2 L-methionine + 2 reduced [2Fe-2S]-[ferredoxin]. Its pathway is protein modification; protein lipoylation via endogenous pathway; protein N(6)-(lipoyl)lysine from octanoyl-[acyl-carrier-protein]: step 2/2. Functionally, catalyzes the radical-mediated insertion of two sulfur atoms into the C-6 and C-8 positions of the octanoyl moiety bound to the lipoyl domains of lipoate-dependent enzymes, thereby converting the octanoylated domains into lipoylated derivatives. This Oryza sativa subsp. japonica (Rice) protein is Lipoyl synthase, mitochondrial.